Reading from the N-terminus, the 610-residue chain is Serine/threonine-protein kinase VRK1 (610 aa).

A Protein kinase domain is found at Phe-32–Val-384. Residues Phe-38–Ile-46 and Lys-61 each bind ATP. The active-site Proton acceptor is Asp-167. 4 disordered regions span residues Ile-317–Ala-476, Ile-498–Gly-530, Lys-544–Arg-577, and Glu-590–Val-610. Over residues Ala-352 to Ala-373 the composition is skewed to basic and acidic residues. Positions Asn-388–Tyr-397 are enriched in acidic residues. Positions Thr-447–Ser-458 are enriched in low complexity. Residues Leu-465–Lys-474 show a composition bias toward polar residues. Low complexity predominate over residues Ser-502–Leu-517. Polar residues-rich tracts occupy residues Ser-550–Ser-559 and Ser-594–Val-610.

Belongs to the protein kinase superfamily. CK1 Ser/Thr protein kinase family. VRK subfamily. Post-translationally, autophosphorylates in vitro. In terms of tissue distribution, present in germ cells at all stages of progression from the mitotic zone to mature oocytes, but not in maturing spermatids (at the protein level). Expressed in the ventral nerve cord and vulva cells.

Its subcellular location is the nucleus. It localises to the cytoplasm. The protein localises to the cajal body. It carries out the reaction L-seryl-[protein] + ATP = O-phospho-L-seryl-[protein] + ADP + H(+). The enzyme catalyses L-threonyl-[protein] + ATP = O-phospho-L-threonyl-[protein] + ADP + H(+). Serine/threonine kinase that phosphorylates baf-1, thus regulating the association of baf-1 with chromatin and nuclear membrane proteins during nuclear envelope formation. May act through the egl-17 signaling pathway. Essential in hermaphrodites for formation of the vulva, uterus, and uterine seam cells and for development and maintenance of the somatic gonad and thus the germ line. Acts to prevent cep-1 from triggering an inappropriate cell cycle arrest, thereby promoting germ cell proliferation. Regulates anchor cell polarity and the timing of anchor cell invasion through the basement membranes separating vulval and somatic gonadal cells during the L3 larval stage. In Caenorhabditis elegans, this protein is Serine/threonine-protein kinase VRK1.